Consider the following 715-residue polypeptide: MSQSGAVSCCPGATNGSLGRSDGVAKMSPKDLFEQRKKYSNSNVIMHETSQYHVQHLATFIMDKSEAITSVDDAIRKLVQLSSKEKIWTQEMLLQVNDQSLRLLDIESQEELEDFPLPTVQRSQTVLNQLRYPSVLLLVCQDSEQSKPDVHFFHCDEVEAELVHEDIESALADCRLGKKMRPQTLKGHQEKIRQRQSILPPPQGPAPIPFQHRGGDSPEAKNRVGPQVPLSEPGFRRRESQEEPRAVLAQKIEKETQILNCALDDIEWFVARLQKAAEAFKQLNQRKKGKKKGKKAPAEGVLTLRARPPSEGEFIDCFQKIKLAINLLAKLQKHIQNPSAAELVHFLFGPLDLIVNTCSGPDIARSVSCPLLSRDAVDFLRGHLVPKEMSLWESLGESWMRPRSEWPREPQVPLYVPKFHSGWEPPVDVLQEAPWEVEGLASAPIEEVSPVSRQSIRNSQKHSPTSEPTPPGDALPPVSSPHTHRGYQPTPAMAKYVKILYDFTARNANELSVLKDEVLEVLEDGRQWWKLRSRSGQAGYVPCNILGEARPEDAGAPFEQAGQKYWGPASPTHKLPPSFPGNKDELMQHMDEVNDELIRKISNIRAQPQRHFRVERSQPVSQPLTYESGPDEVRAWLEAKAFSPRIVENLGILTGPQLFSLNKEELKKVCGEEGVRVYSQLTMQKAFLEKQQSGSELEELMNKFHSMNQRRGEDS.

The PID domain occupies 46–202 (MHETSQYHVQ…RQRQSILPPP (157 aa)). The segment at 183 to 243 (QTLKGHQEKI…GFRRRESQEE (61 aa)) is disordered. The segment covering 199 to 208 (LPPPQGPAPI) has biased composition (pro residues). Basic and acidic residues-rich tracts occupy residues 213 to 222 (RGGDSPEAKN) and 234 to 243 (GFRRRESQEE). Residue serine 240 is modified to Phosphoserine. Residue threonine 303 is modified to Phosphothreonine. The segment at 448-487 (VSPVSRQSIRNSQKHSPTSEPTPPGDALPPVSSPHTHRGY) is disordered. A Phosphoserine modification is found at serine 449. The span at 451–466 (VSRQSIRNSQKHSPTS) shows a compositional bias: polar residues. Position 469 is a phosphothreonine (threonine 469). The region spanning 492 to 551 (AMAKYVKILYDFTARNANELSVLKDEVLEVLEDGRQWWKLRSRSGQAGYVPCNILGEARP) is the SH3 domain. Phosphoserine is present on serine 570.

Belongs to the EPS8 family. In terms of assembly, interacts with ABI1. Part of a complex that contains SOS1, ABI1 and EPS8L2. Associates with F-actin. As to expression, detected in fibroblasts and placenta.

It is found in the cytoplasm. The protein resides in the cell projection. Its subcellular location is the stereocilium. Its function is as follows. Stimulates guanine exchange activity of SOS1. May play a role in membrane ruffling and remodeling of the actin cytoskeleton. In the cochlea, is required for stereocilia maintenance in adult hair cells. In Homo sapiens (Human), this protein is Epidermal growth factor receptor kinase substrate 8-like protein 2 (EPS8L2).